Here is a 68-residue protein sequence, read N- to C-terminus: Sec-independent protein translocase protein TatA (68 aa).

Residues 1-21 traverse the membrane as a helical segment; that stretch reads MGSFSIWHWLIVLAVVLLLFG. Residues 48–68 are disordered; it reads AAAADKSIDGKTVDHKSDEVR. Positions 53–68 are enriched in basic and acidic residues; it reads KSIDGKTVDHKSDEVR.

Belongs to the TatA/E family. The Tat system comprises two distinct complexes: a TatABC complex, containing multiple copies of TatA, TatB and TatC subunits, and a separate TatA complex, containing only TatA subunits. Substrates initially bind to the TatABC complex, which probably triggers association of the separate TatA complex to form the active translocon.

The protein localises to the cell inner membrane. Part of the twin-arginine translocation (Tat) system that transports large folded proteins containing a characteristic twin-arginine motif in their signal peptide across membranes. TatA could form the protein-conducting channel of the Tat system. The chain is Sec-independent protein translocase protein TatA from Sinorhizobium medicae (strain WSM419) (Ensifer medicae).